Consider the following 65-residue polypeptide: DNA-directed RNA polymerase subunit omega (65 aa).

It belongs to the RNA polymerase subunit omega family. In terms of assembly, the RNAP catalytic core consists of 2 alpha, 1 beta, 1 beta' and 1 omega subunit. When a sigma factor is associated with the core the holoenzyme is formed, which can initiate transcription.

The enzyme catalyses RNA(n) + a ribonucleoside 5'-triphosphate = RNA(n+1) + diphosphate. Functionally, promotes RNA polymerase assembly. Latches the N- and C-terminal regions of the beta' subunit thereby facilitating its interaction with the beta and alpha subunits. This Finegoldia magna (strain ATCC 29328 / DSM 20472 / WAL 2508) (Peptostreptococcus magnus) protein is DNA-directed RNA polymerase subunit omega.